Consider the following 164-residue polypeptide: Choriogonadotropin subunit beta (164 aa).

The first 20 residues, 1–20 (MEMLQGLLLCLLLSTGGAWA), serve as a signal peptide directing secretion. Cystine bridges form between Cys-29–Cys-77, Cys-43–Cys-92, Cys-46–Cys-130, Cys-54–Cys-108, Cys-58–Cys-110, and Cys-113–Cys-120. A glycan (N-linked (GlcNAc...) asparagine) is linked at Asn-50. Residues 133 to 164 (HTSQDSSSKDPPRNLTSPSQLPEPADAPLVPQ) are disordered. O-linked (GalNAc...) serine glycosylation occurs at Ser-140. N-linked (GlcNAc...) asparagine glycosylation occurs at Asn-146. O-linked (GalNAc...) serine glycosylation occurs at Ser-151.

Belongs to the glycoprotein hormones subunit beta family. In terms of assembly, heterodimer of a common alpha chain and a unique beta chain which confers biological specificity to thyrotropin, lutropin, follitropin and gonadotropin.

It is found in the secreted. Its function is as follows. Stimulates the ovaries to synthesize the steroids that are essential for the maintenance of pregnancy. This Aotus nancymaae (Ma's night monkey) protein is Choriogonadotropin subunit beta (CGB).